The chain runs to 603 residues: Insulin-like growth factor-binding protein complex acid labile subunit (603 aa).

Residues 1–23 (MALRTGSPALVVLLAFWVALGPC) form the signal peptide. The region spanning 32–74 (ASADAEGPQCPVTCTCSYDDYTDELSVFCSSRNLTQLPDGIPV) is the LRRNT domain. Cystine bridges form between Cys41/Cys47 and Cys45/Cys60. Asn64, Asn85, and Asn96 each carry an N-linked (GlcNAc...) asparagine glycan. 19 LRR repeats span residues 75–96 (STRA…AFQN), 99–120 (SLDF…ALLG), 123–144 (NLYH…LFRH), 147–168 (SLAS…LFRG), 171–192 (HLWD…VFQG), 195–216 (NLHE…LLCG), 219–240 (ELRE…VFIH), 243–264 (RLQK…AFLG), 267–288 (ALRW…TFPG), 291–312 (GLHV…TFKD), 315–336 (FLEE…TFEG), 339–360 (QLEV…AFFG), 363–384 (NVAV…VFQG), 387–408 (RLHS…TFAG), 411–432 (GLRR…SLAG), 435–456 (ELLE…LFQG), 459–480 (QLEY…VLGP), 483–504 (RAFW…LFSS), and 507–528 (RLRY…PGLE). N-linked (GlcNAc...) asparagine glycosylation is present at Asn368. An N-linked (GlcNAc...) asparagine glycan is attached at Asn515. Residues 535-603 (NPWDCSCPLK…DISETLFVHC (69 aa)) form the LRRCT domain. 3 disulfide bridges follow: Cys539–Cys581, Cys541–Cys603, and Cys565–Cys570. 2 N-linked (GlcNAc...) asparagine glycosylation sites follow: Asn578 and Asn586.

In terms of assembly, forms a ternary complex with IGF1 and IGFBP3.

The protein resides in the secreted. It localises to the extracellular space. May have an important role in regulating the access of circulating IGFs to the tissues. In Mus musculus (Mouse), this protein is Insulin-like growth factor-binding protein complex acid labile subunit (Igfals).